The sequence spans 301 residues: Mitochondrial ornithine transporter 1 (301 aa).

A run of 6 helical transmembrane segments spans residues 5–25 (PAIQ…ACVL), 68–88 (SPAL…YGFC), 110–130 (AAAG…TELV), 168–188 (GFYH…FFFF), 207–227 (LGPI…WLAV), and 237–257 (IQVL…LSIV). Solcar repeat units follow at residues 7-91 (IQAA…CQQV), 104-197 (LSDL…SRSF), and 207-293 (LGPI…SRKL).

The protein belongs to the mitochondrial carrier (TC 2.A.29) family. In terms of tissue distribution, expressed in the liver (at protein level).

The protein resides in the mitochondrion inner membrane. Its subcellular location is the mitochondrion membrane. It catalyses the reaction L-citrulline(in) + L-ornithine(out) + H(+)(in) = L-citrulline(out) + L-ornithine(in) + H(+)(out). It carries out the reaction L-ornithine(in) + L-arginine(out) = L-ornithine(out) + L-arginine(in). The catalysed reaction is L-ornithine(out) + L-lysine(in) = L-ornithine(in) + L-lysine(out). The enzyme catalyses L-ornithine(out) + H(+)(in) = L-ornithine(in) + H(+)(out). It catalyses the reaction L-lysine(out) + H(+)(in) = L-lysine(in) + H(+)(out). Its activity is regulated as follows. Inhibited by pyridoxal 5'-phosphate as well as by mercurials (mersalyl, p-chloromercuribenzene sulfonate, and mercuric chloride), N-ethylmaleimide and spermine. Its function is as follows. Mitochondrial ornithine-citrulline antiporter. Catalyzes the exchange between cytosolic ornithine and mitochondrial citrulline plus an H(+), the proton compensates the positive charge of ornithine thus leading to an electroneutral transport. Plays a crucial role in the urea cycle, by connecting the cytosolic and the intramitochondrial reactions of the urea cycle. Lysine and arginine are also transported by the antiport mechanism. In addition, catalyzes an electroneutral exchange of ornithine or lysine for H(+), a reaction driven by the pH gradient across the inner membrane. The chain is Mitochondrial ornithine transporter 1 (Slc25a15) from Rattus norvegicus (Rat).